A 120-amino-acid polypeptide reads, in one-letter code: PE family protein PE10 (120 aa).

The disordered stretch occupies residues 29–59 (GQVTGNGGSGNSGTSAAAANPNSDNTASIAD). The segment covering 40 to 51 (SGTSAAAANPNS) has biased composition (low complexity).

It belongs to the mycobacterial PE family. As to quaternary structure, forms a complex with PE9. The complex interacts with human TLR4.

The protein resides in the secreted. It is found in the cell wall. Together with PE9, induces macrophage apoptosis through human Toll-like receptor 4 (TLR4) signaling pathway. Interaction with TLR4 leads to increased levels of phospho-IRF-3, increase in the transcript levels of IFN-beta and pro-apoptotic genes, up-regulation of IL-10, down-regulation of IL-1b and enhanced levels of macrophage apoptosis. This is PE family protein PE10 from Mycobacterium tuberculosis (strain ATCC 25618 / H37Rv).